Consider the following 814-residue polypeptide: Syn-copalyl diphosphate synthase TPS3, chloroplastic (814 aa).

A chloroplast-targeting transit peptide spans 1–52 (MCSLSTLSPNFSNAYGSKSVSSTASRFPCWQRSNETWKTQSREVIHWTYVVR). Lys248 contacts substrate. Asp386 and Asp388 together coordinate Mg(2+). The DXDD motif signature appears at 386–389 (DIDD). Lys472 serves as a coordination point for substrate.

The protein belongs to the terpene synthase family. The cofactor is Mg(2+). Mostly expressed in trichomes of leaves and fruits.

The protein localises to the plastid. The protein resides in the chloroplast. The enzyme catalyses (2E,6E,10E)-geranylgeranyl diphosphate = 9alpha-copalyl diphosphate. The protein operates within secondary metabolite biosynthesis; terpenoid biosynthesis. Its function is as follows. Involved in the biosynthesis of labdane-type diterpenoid including cleroda-dienols, and peregrinol lactones and furan derivatives, dopaminergic diterpenoids that can bind to dopamine receptors in the human pituitary gland, have probably ability to lower prolactin levels, and are used to treat menstrual cycle disorders (e.g. premenstrual syndrome and mastodynia). Terpene synthase that produces syn-copalyl diphosophate from geranylgeranyl diphosphate (GGPP). This chain is Syn-copalyl diphosphate synthase TPS3, chloroplastic, found in Vitex agnus-castus (Chaste tree).